The chain runs to 151 residues: Tetratricopeptide repeat protein 32 (151 aa).

3 TPR repeats span residues 8 to 41 (SHAT…CACA), 58 to 91 (ATAY…QPNF), and 92 to 125 (EVPY…NPGF).

The chain is Tetratricopeptide repeat protein 32 (TTC32) from Homo sapiens (Human).